A 338-amino-acid chain; its full sequence is Nucleoid-associated protein VSAL_I1059 (338 aa).

A disordered region spans residues 319–338 (KGTPPNLKDQLTRRLGSSES).

This sequence belongs to the YejK family.

The protein localises to the cytoplasm. The protein resides in the nucleoid. The polypeptide is Nucleoid-associated protein VSAL_I1059 (Aliivibrio salmonicida (strain LFI1238) (Vibrio salmonicida (strain LFI1238))).